Consider the following 258-residue polypeptide: Hydroxyethylthiazole kinase (258 aa).

M37 contacts substrate. The ATP site is built by R112 and T158. Substrate is bound at residue A185.

Belongs to the Thz kinase family. The cofactor is Mg(2+).

It catalyses the reaction 5-(2-hydroxyethyl)-4-methylthiazole + ATP = 4-methyl-5-(2-phosphooxyethyl)-thiazole + ADP + H(+). Its pathway is cofactor biosynthesis; thiamine diphosphate biosynthesis; 4-methyl-5-(2-phosphoethyl)-thiazole from 5-(2-hydroxyethyl)-4-methylthiazole: step 1/1. Catalyzes the phosphorylation of the hydroxyl group of 4-methyl-5-beta-hydroxyethylthiazole (THZ). This is Hydroxyethylthiazole kinase from Rhizobium etli (strain ATCC 51251 / DSM 11541 / JCM 21823 / NBRC 15573 / CFN 42).